A 236-amino-acid polypeptide reads, in one-letter code: 2-C-methyl-D-erythritol 4-phosphate cytidylyltransferase (236 aa).

This sequence belongs to the IspD/TarI cytidylyltransferase family. IspD subfamily.

The catalysed reaction is 2-C-methyl-D-erythritol 4-phosphate + CTP + H(+) = 4-CDP-2-C-methyl-D-erythritol + diphosphate. It participates in isoprenoid biosynthesis; isopentenyl diphosphate biosynthesis via DXP pathway; isopentenyl diphosphate from 1-deoxy-D-xylulose 5-phosphate: step 2/6. Functionally, catalyzes the formation of 4-diphosphocytidyl-2-C-methyl-D-erythritol from CTP and 2-C-methyl-D-erythritol 4-phosphate (MEP). The protein is 2-C-methyl-D-erythritol 4-phosphate cytidylyltransferase of Pseudomonas syringae pv. syringae (strain B728a).